Here is a 229-residue protein sequence, read N- to C-terminus: Small ribosomal subunit protein uS3 (229 aa).

The KH type-2 domain occupies 39–107 (VRKFLEKKLK…PAQINIAEIR (69 aa)).

It belongs to the universal ribosomal protein uS3 family. Part of the 30S ribosomal subunit. Forms a tight complex with proteins S10 and S14.

In terms of biological role, binds the lower part of the 30S subunit head. Binds mRNA in the 70S ribosome, positioning it for translation. The chain is Small ribosomal subunit protein uS3 from Shewanella loihica (strain ATCC BAA-1088 / PV-4).